The sequence spans 475 residues: Dihydrolipoyl dehydrogenase (475 aa).

Residues 37 to 46 (EQYYSLGGVC), lysine 55, and alanine 118 contribute to the FAD site. Residues cysteine 46 and cysteine 51 are joined by a disulfide bond. NAD(+) contacts are provided by residues 183 to 187 (GGGII), aspartate 206, valine 239, and 272 to 275 (AIGR). FAD is bound by residues aspartate 315 and alanine 323. Histidine 447 functions as the Proton acceptor in the catalytic mechanism.

The protein belongs to the class-I pyridine nucleotide-disulfide oxidoreductase family. As to quaternary structure, homodimer. It depends on FAD as a cofactor.

The protein resides in the cytoplasm. The catalysed reaction is N(6)-[(R)-dihydrolipoyl]-L-lysyl-[protein] + NAD(+) = N(6)-[(R)-lipoyl]-L-lysyl-[protein] + NADH + H(+). In terms of biological role, lipoamide dehydrogenase is a component of the alpha-ketoacid dehydrogenase complexes. The sequence is that of Dihydrolipoyl dehydrogenase (lpdA) from Buchnera aphidicola subsp. Baizongia pistaciae (strain Bp).